A 103-amino-acid chain; its full sequence is RNA-binding protein YlxQ (103 aa).

It belongs to the eukaryotic ribosomal protein eL8 family.

Functionally, RNA-binding protein that recognizes the K-turn motif present in ribosomal RNA, but also in box C/D and box C'/D' sRNAs. In Enterococcus faecium (Streptococcus faecium), this protein is RNA-binding protein YlxQ.